The sequence spans 607 residues: uncharacterized protein (607 aa).

Disordered regions lie at residues 28 to 114 (GAER…KLRR) and 142 to 188 (DQER…NNSS). The segment covering 35–50 (SSHGSINSRSASPNKA) has biased composition (polar residues). Basic and acidic residues-rich tracts occupy residues 90–102 (VNGEGAEKGDHDT) and 161–174 (KENKSLKTTAKDLS). Residues 177–188 (SSSSMKKANNSS) show a composition bias toward low complexity. 2 PHD-type zinc fingers span residues 263-312 (NDYC…CKHH) and 406-459 (PILC…HSDH).

This is an uncharacterized protein from Schizosaccharomyces pombe (strain 972 / ATCC 24843) (Fission yeast).